A 155-amino-acid polypeptide reads, in one-letter code: Gas vesicle protein K (155 aa).

Belongs to the gas vesicle GvpK family.

It is found in the gas vesicle. Functionally, might be involved in nucleating gas vesicle formation. Gas vesicles (GV) are hollow, gas filled proteinaceous nanostructures. During planktonic growth they allow positioning of the organism at a favorable depth for light or nutrient acquisition. In terms of biological role, cluster expression in E.coli (gvpA1-gvpA2-gvpC-gvpN-gvpJ-gvpK-gvpF-gvpG-gvpV-gvpW) allows cells to float and produces irregularly shaped gas vesicles. The chain is Gas vesicle protein K from Nostoc sp. (strain PCC 7120 / SAG 25.82 / UTEX 2576).